The following is a 404-amino-acid chain: CD209 antigen (404 aa).

The Cytoplasmic segment spans residues 1-37; that stretch reads MSDSKEPRLQQLGLLEEEQLRGLGFRQTRGYKSLAGC. 3 consecutive short sequence motifs (endocytosis signal) follow at residues 14-15, 16-18, and 31-34; these read LL, EEE, and YKSL. A helical; Signal-anchor for type II membrane protein membrane pass occupies residues 38–58; sequence LGHGPLVLQLLSFTLLAGLLV. Residues 59–404 are Extracellular-facing; it reads QVSKVPSSIS…APATPNPPPA (346 aa). The N-linked (GlcNAc...) asparagine glycan is linked to Asn80. Repeat copies occupy residues 96 to 118, 119 to 141, 142 to 164, 165 to 187, 188 to 210, 211 to 233, and 234 to 257. The tract at residues 96 to 257 is 7 X approximate tandem repeats; the sequence is KLQEIYQELT…AVERLCHPCP (162 aa). Cystine bridges form between Cys256-Cys267, Cys284-Cys377, and Cys356-Cys369. Residues 263-378 enclose the C-type lectin domain; sequence FQGNCYFMSN…CNLAKFWICK (116 aa). Residues Glu347, Asn349, Val351, Glu354, Asn365, and Asp366 each contribute to the Ca(2+) site.

As to quaternary structure, homotetramer. Interacts with C1QBP; the interaction is indicative for a C1q:C1QBP:CD209 signaling complex. Interacts with ICAM2 and ICAM3 by binding to mannose-like carbohydrates. Interacts (via C-type lectin domain) with CEACAM1 (via Lewis X moieties); this interaction is regulated by the glycosylation pattern of CEACAM1 on cell types and regulates contact between dendritic cells and neutrophils. (Microbial infection) Interacts with HIV-1 and HIV-2 gp120. In terms of assembly, (Microbial infection) Interacts with ebolavirus envelope glycoproteins. As to quaternary structure, (Microbial infection) Interacts with cytomegalovirus gB protein. (Microbial infection) Interacts with HCV E2 protein. In terms of assembly, (Microbial infection) Interacts with dengue virus major envelope protein E. As to quaternary structure, (Microbial infection) Interacts with measles hemagglutinin. (Microbial infection) Interacts with herpes simplex virus 1 surface proteins. In terms of assembly, (Microbial infection) Interacts with Influenzavirus A hemagglutinin. As to quaternary structure, (Microbial infection) Interacts with SARS-CoV spike glycoprotein. (Microbial infection) Interacts with Japanese encephalitis virus E protein. In terms of assembly, (Microbial infection) Interacts with Lassa virus Glycoprotein. As to quaternary structure, (Microbial infection) Interacts with marburg virus glycoprotein. (Microbial infection) Interacts with Respiratory syncytial virus glycoprotein G. In terms of assembly, (Microbial infection) Interacts with Rift valley fever virus and uukuniemi virus envelope glycoprotein. As to quaternary structure, (Microbial infection) Interacts with west-nile virus envelope glycoprotein. (Microbial infection) Interacts with whole M.bovis cells in a Ca(2+)-dependent and independent manner; in vitro experiments suggest it interacts with CH60.1 (groL1), DnaK, GADPH (gap) and LrpG. As to expression, predominantly expressed in dendritic cells and in DC-residing tissues. Also found in placental macrophages, endothelial cells of placental vascular channels, peripheral blood mononuclear cells, and THP-1 monocytes.

The protein resides in the cell membrane. It localises to the secreted. Pathogen-recognition receptor expressed on the surface of immature dendritic cells (DCs) and involved in initiation of primary immune response. Thought to mediate the endocytosis of pathogens which are subsequently degraded in lysosomal compartments. The receptor returns to the cell membrane surface and the pathogen-derived antigens are presented to resting T-cells via MHC class II proteins to initiate the adaptive immune response. Its function is as follows. On DCs it is a high affinity receptor for ICAM2 and ICAM3 by binding to mannose-like carbohydrates. May act as a DC rolling receptor that mediates transendothelial migration of DC presursors from blood to tissues by binding endothelial ICAM2. Seems to regulate DC-induced T-cell proliferation by binding to ICAM3 on T-cells in the immunological synapse formed between DC and T-cells. Functionally, (Microbial infection) Acts as an attachment receptor for HIV-1 and HIV-2. In terms of biological role, (Microbial infection) Acts as an attachment receptor for Ebolavirus. (Microbial infection) Acts as an attachment receptor for Cytomegalovirus. Its function is as follows. (Microbial infection) Acts as an attachment receptor for HCV. Functionally, (Microbial infection) Acts as an attachment receptor for Dengue virus. In terms of biological role, (Microbial infection) Acts as an attachment receptor for Measles virus. (Microbial infection) Acts as an attachment receptor for Herpes simplex virus 1. Its function is as follows. (Microbial infection) Acts as an attachment receptor for Influenzavirus A. Functionally, (Microbial infection) Acts as an attachment receptor for SARS-CoV. In terms of biological role, (Microbial infection) Acts as an attachment receptor for Japanese encephalitis virus. (Microbial infection) Acts as an attachment receptor for Lassa virus. Acts as an attachment receptor for Marburg virusn. Its function is as follows. (Microbial infection) Acts as an attachment receptor for Respiratory syncytial virus. Functionally, (Microbial infection) Acts as an attachment receptor for Rift valley fever virus and uukuniemi virus. In terms of biological role, (Microbial infection) Acts as an attachment receptor for West-nile virus. (Microbial infection) Probably recognizes in a calcium-dependent manner high mannose N-linked oligosaccharides in a variety of bacterial pathogen antigens, including Leishmania pifanoi LPG, Lewis-x antigen in Helicobacter pylori LPS, mannose in Klebsiella pneumonae LPS, di-mannose and tri-mannose in Mycobacterium tuberculosis ManLAM and Lewis-x antigen in Schistosoma mansoni SEA. Recognition of M.tuberculosis by dendritic cells occurs partially via this molecule. The protein is CD209 antigen (CD209) of Homo sapiens (Human).